A 207-amino-acid chain; its full sequence is Ribosomal RNA small subunit methyltransferase G (207 aa).

S-adenosyl-L-methionine is bound by residues Gly-74, Leu-79, 125–126 (VE), and Arg-140.

It belongs to the methyltransferase superfamily. RNA methyltransferase RsmG family.

It localises to the cytoplasm. The catalysed reaction is guanosine(527) in 16S rRNA + S-adenosyl-L-methionine = N(7)-methylguanosine(527) in 16S rRNA + S-adenosyl-L-homocysteine. Functionally, specifically methylates the N7 position of guanine in position 527 of 16S rRNA. This chain is Ribosomal RNA small subunit methyltransferase G, found in Shewanella piezotolerans (strain WP3 / JCM 13877).